We begin with the raw amino-acid sequence, 398 residues long: 1-deoxy-D-xylulose 5-phosphate reductoisomerase (398 aa).

NADPH is bound by residues Thr-11, Gly-12, Ser-13, Ile-14, Arg-38, Asn-39, and Asn-125. Lys-126 serves as a coordination point for 1-deoxy-D-xylulose 5-phosphate. Glu-127 contacts NADPH. Asp-151 serves as a coordination point for Mn(2+). 1-deoxy-D-xylulose 5-phosphate is bound by residues Ser-152, Glu-153, Ser-179, and His-202. Glu-153 is a binding site for Mn(2+). Residue Gly-208 coordinates NADPH. Positions 215, 220, 221, and 224 each coordinate 1-deoxy-D-xylulose 5-phosphate. Mn(2+) is bound at residue Glu-224.

Belongs to the DXR family. Requires Mg(2+) as cofactor. Mn(2+) is required as a cofactor.

The enzyme catalyses 2-C-methyl-D-erythritol 4-phosphate + NADP(+) = 1-deoxy-D-xylulose 5-phosphate + NADPH + H(+). It functions in the pathway isoprenoid biosynthesis; isopentenyl diphosphate biosynthesis via DXP pathway; isopentenyl diphosphate from 1-deoxy-D-xylulose 5-phosphate: step 1/6. Its function is as follows. Catalyzes the NADPH-dependent rearrangement and reduction of 1-deoxy-D-xylulose-5-phosphate (DXP) to 2-C-methyl-D-erythritol 4-phosphate (MEP). In Burkholderia vietnamiensis (strain G4 / LMG 22486) (Burkholderia cepacia (strain R1808)), this protein is 1-deoxy-D-xylulose 5-phosphate reductoisomerase.